A 138-amino-acid chain; its full sequence is UPF0047 protein YjbQ (138 aa).

This sequence belongs to the UPF0047 family.

In Escherichia coli O157:H7, this protein is UPF0047 protein YjbQ (yjbQ).